A 194-amino-acid polypeptide reads, in one-letter code: Peptidyl-tRNA hydrolase (194 aa).

Residue tyrosine 17 participates in tRNA binding. The active-site Proton acceptor is histidine 22. Positions 68, 70, and 116 each coordinate tRNA.

The protein belongs to the PTH family. Monomer.

The protein localises to the cytoplasm. It carries out the reaction an N-acyl-L-alpha-aminoacyl-tRNA + H2O = an N-acyl-L-amino acid + a tRNA + H(+). Hydrolyzes ribosome-free peptidyl-tRNAs (with 1 or more amino acids incorporated), which drop off the ribosome during protein synthesis, or as a result of ribosome stalling. Its function is as follows. Catalyzes the release of premature peptidyl moieties from peptidyl-tRNA molecules trapped in stalled 50S ribosomal subunits, and thus maintains levels of free tRNAs and 50S ribosomes. The sequence is that of Peptidyl-tRNA hydrolase from Pseudoalteromonas translucida (strain TAC 125).